The chain runs to 304 residues: Uricase (304 aa).

Position 2 is an N-acetylalanine (Ala2). N6-acetyllysine; alternate occurs at positions 10 and 23. An N6-succinyllysine; alternate mark is found at Lys10 and Lys23. The active-site Charge relay system is the Lys23. Lys27 and Lys36 each carry N6-acetyllysine. Phosphoserine is present on residues Ser39 and Ser63. Thr68 functions as the Charge relay system in the catalytic mechanism. The urate site is built by Thr68 and Asp69. Lys118, Lys122, and Lys164 each carry N6-acetyllysine. Phe170 lines the urate pocket. Lys175 and Lys185 each carry N6-acetyllysine. Arg187 is a binding site for urate. Lys221 and Lys228 each carry N6-acetyllysine; alternate. Residues Lys221 and Lys228 each carry the N6-succinyllysine; alternate modification. The residue at position 232 (Ser232) is a Phosphoserine. Urate contacts are provided by Val235, Gln236, and Asn262. The active-site Charge relay system is His264. The residue at position 278 (Lys278) is an N6-acetyllysine. Tyr289 is subject to Phosphotyrosine. The Microbody targeting signal motif lies at 302–304 (SKL).

It belongs to the uricase family.

The protein localises to the peroxisome. It catalyses the reaction urate + O2 + H2O = 5-hydroxyisourate + H2O2. It participates in purine metabolism; urate degradation; (S)-allantoin from urate: step 1/3. In terms of biological role, catalyzes the oxidation of uric acid to 5-hydroxyisourate, which is further processed to form (S)-allantoin. The protein is Uricase (UOX) of Canis lupus familiaris (Dog).